Reading from the N-terminus, the 138-residue chain is ATP synthase epsilon chain, chloroplastic (138 aa).

The protein belongs to the ATPase epsilon chain family. As to quaternary structure, F-type ATPases have 2 components, CF(1) - the catalytic core - and CF(0) - the membrane proton channel. CF(1) has five subunits: alpha(3), beta(3), gamma(1), delta(1), epsilon(1). CF(0) has three main subunits: a, b and c.

Its subcellular location is the plastid. The protein resides in the chloroplast thylakoid membrane. Produces ATP from ADP in the presence of a proton gradient across the membrane. The sequence is that of ATP synthase epsilon chain, chloroplastic from Anthoceros angustus (Hornwort).